A 702-amino-acid chain; its full sequence is Capsid vertex component 1 (702 aa).

The interval 200-244 (MGESGTPTPQASSVSGGAGPAVVGTPDPPISPEEQLTAPGGDTAT) is disordered. Residues 210–224 (ASSVSGGAGPAVVGT) show a composition bias toward low complexity.

The protein belongs to the herpesviridae CVC1 protein family. As to quaternary structure, interacts (via C-terminus) with capsid vertex component 2/CVC2.

Its subcellular location is the virion. The protein resides in the host nucleus. Its function is as follows. Capsid vertex-specific component that plays a role during viral DNA encapsidation, assuring correct genome cleavage and presumably stabilizing capsids that contain full-length viral genomes. The protein is Capsid vertex component 1 of Homo sapiens (Human).